A 1399-amino-acid chain; its full sequence is DNA-directed RNA polymerase subunit beta' (1399 aa).

Residues Cys70, Cys72, Cys85, and Cys88 each contribute to the Zn(2+) site. Asp460, Asp462, and Asp464 together coordinate Mg(2+). Zn(2+) is bound by residues Cys814, Cys888, Cys895, and Cys898.

Belongs to the RNA polymerase beta' chain family. As to quaternary structure, the RNAP catalytic core consists of 2 alpha, 1 beta, 1 beta' and 1 omega subunit. When a sigma factor is associated with the core the holoenzyme is formed, which can initiate transcription. Requires Mg(2+) as cofactor. Zn(2+) is required as a cofactor.

The enzyme catalyses RNA(n) + a ribonucleoside 5'-triphosphate = RNA(n+1) + diphosphate. DNA-dependent RNA polymerase catalyzes the transcription of DNA into RNA using the four ribonucleoside triphosphates as substrates. In Pseudomonas savastanoi pv. phaseolicola (strain 1448A / Race 6) (Pseudomonas syringae pv. phaseolicola (strain 1448A / Race 6)), this protein is DNA-directed RNA polymerase subunit beta'.